The following is a 360-amino-acid chain: Aminomethyltransferase (360 aa).

The protein belongs to the GcvT family. As to quaternary structure, the glycine cleavage system is composed of four proteins: P, T, L and H.

The enzyme catalyses N(6)-[(R)-S(8)-aminomethyldihydrolipoyl]-L-lysyl-[protein] + (6S)-5,6,7,8-tetrahydrofolate = N(6)-[(R)-dihydrolipoyl]-L-lysyl-[protein] + (6R)-5,10-methylene-5,6,7,8-tetrahydrofolate + NH4(+). Functionally, the glycine cleavage system catalyzes the degradation of glycine. The protein is Aminomethyltransferase of Pseudomonas syringae pv. tomato (strain ATCC BAA-871 / DC3000).